Here is a 1439-residue protein sequence, read N- to C-terminus: Histone-lysine N-methyltransferase NSD3 (1439 aa).

The interval 121–151 (PHEILEKPSPPQPPPPPSVPQTVIPKKTGSP) is disordered. Over residues 128 to 139 (PSPPQPPPPPSV) the composition is skewed to pro residues. A Phosphoserine modification is found at serine 150. The short motif at 154 to 157 (KLKI) is the KIKL element. Positions 181–247 (QASEHTKSKH…PREEPVLKEA (67 aa)) are disordered. Residues 187 to 201 (KSKHESRKEKRKKSN) show a composition bias toward basic residues. Positions 202–244 (RHESSRSEERRSHKIPKLEPEGQNRPNERVDTAPEKPREEPVL) are enriched in basic and acidic residues. Residues lysine 218 and lysine 245 each participate in a glycyl lysine isopeptide (Lys-Gly) (interchain with G-Cter in SUMO2) cross-link. The PWWP 1 domain maps to 270 to 333 (VGDLVWSKVG…EKRVREYKGH (64 aa)). Disordered stretches follow at residues 344 to 367 (AKQA…ERAQ) and 401 to 466 (EASS…PPPV). Composition is skewed to polar residues over residues 401 to 413 (EASS…VTSK) and 425 to 445 (VLNS…QSST). Lysine 413 is covalently cross-linked (Glycyl lysine isopeptide (Lys-Gly) (interchain with G-Cter in SUMO2)). Residue serine 457 is modified to Phosphoserine. Residues lysine 502 and lysine 532 each participate in a glycyl lysine isopeptide (Lys-Gly) (interchain with G-Cter in SUMO2) cross-link. The segment at 540–695 (QDRLIISSPS…VDSSLSRRGV (156 aa)) is disordered. Over residues 546-568 (SSPSQRSEKPAQSASSPEATSGS) the composition is skewed to polar residues. A compositionally biased stretch (basic and acidic residues) spans 583 to 595 (TRSESEKSAEVVP). Serine 585, serine 587, and serine 590 each carry phosphoserine. Lysine 628 participates in a covalent cross-link: Glycyl lysine isopeptide (Lys-Gly) (interchain with G-Cter in SUMO2). A compositionally biased stretch (polar residues) spans 637 to 648 (STDVETASCTYR). Position 655 is a phosphoserine (serine 655). Low complexity predominate over residues 670-691 (DSPSATADADASDAQSVDSSLS). PHD-type zinc fingers lie at residues 701–748 (DTVC…CETG), 749–805 (QHPC…CSME), and 862–955 (VGFC…CKAG). Lysine 790 is subject to N6-acetyllysine. The PWWP 2 domain occupies 960-1025 (YKQIVWVKLG…QGRVFPYVEG (66 aa)). Residues 1036–1065 (INKTFKKALEEAAKRFQELKAQRESKEALE) adopt a coiled-coil conformation. An AWS domain is found at 1096–1146 (SEIPRCNCKPGDENPCGLESQCLNRMSQYECHPQVCPAGDRCQNQCFTKRL). One can recognise an SET domain in the interval 1148–1265 (PDAEVIKTER…AGMELTFNYN (118 aa)). Lysine 1154 is covalently cross-linked (Glycyl lysine isopeptide (Lys-Gly) (interchain with G-Cter in SUMO2)). Positions 1272-1288 (GRTVCHCGADNCSGFLG) constitute a Post-SET domain. The PHD-type 4; atypical zinc-finger motif lies at 1323–1370 (EDYCFQCGDGGELVMCDKKDCPKAYHLLCLNLTQPPHGKWECPWHRCD).

This sequence belongs to the class V-like SAM-binding methyltransferase superfamily. Histone-lysine methyltransferase family. SET2 subfamily. As to quaternary structure, interacts with BRD4. Interacts (via KIKL motif) with BRD3 (via NET domain).

It is found in the nucleus. Its subcellular location is the chromosome. It carries out the reaction L-lysyl(4)-[histone H3] + 2 S-adenosyl-L-methionine = N(6),N(6)-dimethyl-L-lysyl(4)-[histone H3] + 2 S-adenosyl-L-homocysteine + 2 H(+). The enzyme catalyses L-lysyl(27)-[histone H3] + 2 S-adenosyl-L-methionine = N(6),N(6)-dimethyl-L-lysyl(27)-[histone H3] + 2 S-adenosyl-L-homocysteine + 2 H(+). Functionally, histone methyltransferase. Preferentially dimethylates 'Lys-4' and 'Lys-27' of histone H3 forming H3K4me2 and H3K27me2. H3 'Lys-4' methylation represents a specific tag for epigenetic transcriptional activation, while 'Lys-27' is a mark for transcriptional repression. In Mus musculus (Mouse), this protein is Histone-lysine N-methyltransferase NSD3 (Nsd3).